A 204-amino-acid polypeptide reads, in one-letter code: Putative copper-binding protein (204 aa).

Cu cation-binding residues include C77, C81, and H166.

Belongs to the SCO1/2 family.

The sequence is that of Putative copper-binding protein (scoP) from Stutzerimonas stutzeri (Pseudomonas stutzeri).